Here is a 335-residue protein sequence, read N- to C-terminus: Pharynx and intestine in excess protein 1 (335 aa).

A Glycyl lysine isopeptide (Lys-Gly) (interchain with G-Cter in SUMO) cross-link involves residue lysine 68. The C3H1-type 1 zinc finger occupies 98–126 (EYKTRLCDAFRREGYCPYNDNCTYAHGQD). A compositionally biased stretch (basic and acidic residues) spans 130-156 (VPRRRQEYYSRDPPRERRDSRSRRDDV). The tract at residues 130–188 (VPRRRQEYYSRDPPRERRDSRSRRDDVDTTINRSSSSASKHHDENRRPSNNHGSSNRRQ) is disordered. Polar residues-rich tracts occupy residues 158 to 167 (TTINRSSSSA) and 177 to 187 (PSNNHGSSNRR). The C3H1-type 2 zinc-finger motif lies at 184-211 (SNRRQICHNFERGNCRYGPRCRFIHVEQ). The segment at 288-291 (MAPT) is required for inhibition of Ser-2 phosphorylation.

Interacts with hda-1, let-418 and mep-1. Interacts (via C terminus) with cit-1.1 (via C terminus). In terms of processing, sumoylated in adult germ cells.

The protein localises to the nucleus. It is found in the cytoplasm. Its subcellular location is the cytoskeleton. It localises to the microtubule organizing center. The protein resides in the centrosome. The protein localises to the spindle. It is found in the cytoplasmic granule. Its function is as follows. Maternally provided pie-1 is required for germline cell fate determination. Functions as a repressor of RNA polymerase II-dependent gene expression in the developing germline. Required for expression of nos-2 in P4 germline blastomere cells. Inhibits the histone deacetylase activity of hda-1. Represses transcriptional activation of cdk-9 and cit-1.1, which are members of the P-TEFb complex. Acts redundantly with gei-17 to promote piRNA-mediated silencing and fertility in adult germline. Promotes the sumoylation of hda-1 in adult animals but not in embryos thereby regulating its interaction with mep-1. This is Pharynx and intestine in excess protein 1 from Caenorhabditis elegans.